The chain runs to 432 residues: Adenylosuccinate synthetase (432 aa).

Residues 12-18 (GDEGKGK) and 40-42 (GHT) each bind GTP. Aspartate 13 serves as the catalytic Proton acceptor. 2 residues coordinate Mg(2+): aspartate 13 and glycine 40. IMP is bound by residues 13–16 (DEGK), 38–41 (NAGH), threonine 132, arginine 146, glutamine 226, threonine 241, and arginine 305. The active-site Proton donor is the histidine 41. 301 to 307 (TVTGRKR) contacts substrate. GTP is bound by residues arginine 307, 333 to 335 (KLD), and 415 to 417 (STS).

It belongs to the adenylosuccinate synthetase family. Homodimer. The cofactor is Mg(2+).

Its subcellular location is the cytoplasm. It catalyses the reaction IMP + L-aspartate + GTP = N(6)-(1,2-dicarboxyethyl)-AMP + GDP + phosphate + 2 H(+). Its pathway is purine metabolism; AMP biosynthesis via de novo pathway; AMP from IMP: step 1/2. Plays an important role in the de novo pathway of purine nucleotide biosynthesis. Catalyzes the first committed step in the biosynthesis of AMP from IMP. The protein is Adenylosuccinate synthetase of Sinorhizobium fredii (strain NBRC 101917 / NGR234).